Consider the following 241-residue polypeptide: Uridylate kinase (241 aa).

12-15 contributes to the ATP binding site; sequence KLSG. The segment at 20–25 is involved in allosteric activation by GTP; sequence GATGYG. Gly-54 provides a ligand contact to UMP. Gly-55 and Arg-59 together coordinate ATP. UMP contacts are provided by residues Asp-74 and 135 to 142; that span reads TGNPYMTT. Positions 163, 169, and 172 each coordinate ATP.

It belongs to the UMP kinase family. Homohexamer.

Its subcellular location is the cytoplasm. It catalyses the reaction UMP + ATP = UDP + ADP. It participates in pyrimidine metabolism; CTP biosynthesis via de novo pathway; UDP from UMP (UMPK route): step 1/1. With respect to regulation, allosterically activated by GTP. Inhibited by UTP. Functionally, catalyzes the reversible phosphorylation of UMP to UDP. The sequence is that of Uridylate kinase from Dehalococcoides mccartyi (strain CBDB1).